Here is a 106-residue protein sequence, read N- to C-terminus: Ferredoxin-2 (106 aa).

4Fe-4S ferredoxin-type domains follow at residues 2-29 and 30-59; these read YVVT…YEGE and NFLV…GKWL. 2 residues coordinate [3Fe-4S] cluster: Cys8 and Cys16. Positions 20, 39, 42, and 45 each coordinate [4Fe-4S] cluster. [3Fe-4S] cluster is bound at residue Cys49. A disordered region spans residues 80–106; it reads ADADDWKDKPDKTGLLSENPGKGTVCH.

Requires [4Fe-4S] cluster as cofactor. [3Fe-4S] cluster is required as a cofactor.

Ferredoxins are iron-sulfur proteins that transfer electrons in a wide variety of metabolic reactions. This Rhodospirillum rubrum protein is Ferredoxin-2.